Reading from the N-terminus, the 314-residue chain is L-lactate dehydrogenase (314 aa).

Residues Val17, Asp38, Lys43, Tyr69, and 83–84 contribute to the NAD(+) site; that span reads GA. Substrate contacts are provided by Gln86 and Arg92. NAD(+) is bound by residues Ser105, 122-124, and Ser147; that span reads ASN. 124–127 is a substrate binding site; the sequence is NPVD. 152 to 155 contacts substrate; that stretch reads DSAR. The beta-D-fructose 1,6-bisphosphate site is built by Arg157 and His172. The active-site Proton acceptor is the His179. Tyr223 carries the post-translational modification Phosphotyrosine. Thr232 lines the substrate pocket.

This sequence belongs to the LDH/MDH superfamily. LDH family. Homotetramer.

The protein resides in the cytoplasm. The enzyme catalyses (S)-lactate + NAD(+) = pyruvate + NADH + H(+). It functions in the pathway fermentation; pyruvate fermentation to lactate; (S)-lactate from pyruvate: step 1/1. Its activity is regulated as follows. Allosterically activated by fructose 1,6-bisphosphate (FBP). Functionally, catalyzes the conversion of lactate to pyruvate. In Corynebacterium glutamicum (strain ATCC 13032 / DSM 20300 / JCM 1318 / BCRC 11384 / CCUG 27702 / LMG 3730 / NBRC 12168 / NCIMB 10025 / NRRL B-2784 / 534), this protein is L-lactate dehydrogenase.